A 405-amino-acid chain; its full sequence is Phosphoglycerate kinase (405 aa).

Substrate-binding positions include 23 to 25, Arg39, 62 to 65, Arg121, and Arg154; these read DFN and HLGR. ATP contacts are provided by residues Lys207, Gly298, Glu329, and 355-358; that span reads GGDT.

This sequence belongs to the phosphoglycerate kinase family. In terms of assembly, monomer.

Its subcellular location is the cytoplasm. It carries out the reaction (2R)-3-phosphoglycerate + ATP = (2R)-3-phospho-glyceroyl phosphate + ADP. The protein operates within carbohydrate degradation; glycolysis; pyruvate from D-glyceraldehyde 3-phosphate: step 2/5. The chain is Phosphoglycerate kinase from Campylobacter hominis (strain ATCC BAA-381 / DSM 21671 / CCUG 45161 / LMG 19568 / NCTC 13146 / CH001A).